The primary structure comprises 221 residues: Probable nicotinate-nucleotide adenylyltransferase (221 aa).

The protein belongs to the NadD family.

It catalyses the reaction nicotinate beta-D-ribonucleotide + ATP + H(+) = deamido-NAD(+) + diphosphate. It participates in cofactor biosynthesis; NAD(+) biosynthesis; deamido-NAD(+) from nicotinate D-ribonucleotide: step 1/1. In terms of biological role, catalyzes the reversible adenylation of nicotinate mononucleotide (NaMN) to nicotinic acid adenine dinucleotide (NaAD). This chain is Probable nicotinate-nucleotide adenylyltransferase, found in Marinomonas sp. (strain MWYL1).